A 661-amino-acid polypeptide reads, in one-letter code: UvrABC system protein B (661 aa).

Residues N24–I209 enclose the Helicase ATP-binding domain. Residue G37–T44 coordinates ATP. A Beta-hairpin motif is present at residues Y90–I113. The 165-residue stretch at D430–F594 folds into the Helicase C-terminal domain. In terms of domain architecture, UVR spans E622–E657.

The protein belongs to the UvrB family. Forms a heterotetramer with UvrA during the search for lesions. Interacts with UvrC in an incision complex.

It is found in the cytoplasm. Functionally, the UvrABC repair system catalyzes the recognition and processing of DNA lesions. A damage recognition complex composed of 2 UvrA and 2 UvrB subunits scans DNA for abnormalities. Upon binding of the UvrA(2)B(2) complex to a putative damaged site, the DNA wraps around one UvrB monomer. DNA wrap is dependent on ATP binding by UvrB and probably causes local melting of the DNA helix, facilitating insertion of UvrB beta-hairpin between the DNA strands. Then UvrB probes one DNA strand for the presence of a lesion. If a lesion is found the UvrA subunits dissociate and the UvrB-DNA preincision complex is formed. This complex is subsequently bound by UvrC and the second UvrB is released. If no lesion is found, the DNA wraps around the other UvrB subunit that will check the other stand for damage. The sequence is that of UvrABC system protein B from Fervidobacterium nodosum (strain ATCC 35602 / DSM 5306 / Rt17-B1).